A 205-amino-acid polypeptide reads, in one-letter code: Large ribosomal subunit protein uL13 (205 aa).

Belongs to the universal ribosomal protein uL13 family.

In Lupinus luteus (European yellow lupine), this protein is Large ribosomal subunit protein uL13 (RPL13A).